The chain runs to 1700 residues: Probable serine/threonine-protein kinase ifkC (1700 aa).

The tract at residues 1-25 is disordered; that stretch reads MPPKPKQKAKQPSQQPPPPPPPAAA. Residues 14–23 are compositionally biased toward pro residues; that stretch reads QQPPPPPPPA. The RWD domain maps to 74–197; that stretch reads MELEALQAIF…EIAKDFLNEN (124 aa). Over residues 454-463 the composition is skewed to polar residues; sequence GLKKSPSTFE. A disordered region spans residues 454 to 488; it reads GLKKSPSTFEYSGEGGGGGVGGGSSQKTINPHQQS. Over residues 466 to 477 the composition is skewed to gly residues; it reads GEGGGGGVGGGS. The segment covering 479-488 has biased composition (polar residues); sequence QKTINPHQQS. In terms of domain architecture, Protein kinase spans 494–1027; that stretch reads FEEIQLLGRG…AQQLLQSELM (534 aa). Residues 500 to 508 and Lys523 contribute to the ATP site; that span reads LGRGGFGQV. 2 disordered regions span residues 568 to 639 and 689 to 760; these read LTND…ENND and GNNT…SSSK. The segment covering 572–639 has biased composition (acidic residues); that stretch reads NSDDDDDDDD…SEFESEENND (68 aa). The segment covering 697–735 has biased composition (low complexity); that stretch reads SSNQHLQQQQQQNQSQQQKKQPQQNQSQQQKKLKNSNSK. A compositionally biased stretch (basic residues) spans 736-752; it reads SKSKSKSKSKSKSKSNS. Asp822 (proton acceptor) is an active-site residue. Composition is skewed to low complexity over residues 850–875, 1135–1158, 1230–1240, and 1509–1531; these read TSTL…SSNS, NNSS…NTNS, SSNGNSNNNNS, and NNSN…SYNN. 4 disordered regions span residues 850–901, 1134–1160, 1216–1253, and 1507–1531; these read TSTL…EVEG, FNNS…NSVV, KHHH…SNTT, and NLNN…SYNN.

Belongs to the protein kinase superfamily. Ser/Thr protein kinase family. GCN2 subfamily.

The enzyme catalyses L-seryl-[protein] + ATP = O-phospho-L-seryl-[protein] + ADP + H(+). It catalyses the reaction L-threonyl-[protein] + ATP = O-phospho-L-threonyl-[protein] + ADP + H(+). This is Probable serine/threonine-protein kinase ifkC (ifkC) from Dictyostelium discoideum (Social amoeba).